Reading from the N-terminus, the 931-residue chain is Kinesin heavy chain (931 aa).

The Kinesin motor domain occupies 6–329; that stretch reads SIKVVARFRP…LRFGMRAKSI (324 aa). Residues 87-94 and 237-244 each bind ATP; these read GQTGAGKS and GSEKVGKT. Residues 342–864 adopt a coiled-coil conformation; sequence AELKSLLKKA…VKERLELAKA (523 aa). Disordered regions lie at residues 388–465 and 886–931; these read TTDA…EKQL and AKPL…FTKS. Over residues 402–419 the composition is skewed to polar residues; sequence STRPSTPSLISDSRSETP. Over residues 432–456 the composition is skewed to basic and acidic residues; it reads LDKDEREEFLRRENELQDQISEKES. Polar residues predominate over residues 902–931; the sequence is PTIQNLQGQNEGNTSSGSSSKRASWFFTKS.

This sequence belongs to the TRAFAC class myosin-kinesin ATPase superfamily. Kinesin family. Kinesin subfamily.

It localises to the cytoplasm. The protein resides in the cytoskeleton. Functionally, kinesin is a microtubule-associated force-producing protein that may play a role in organelle transport. Its motor activity is directed toward the microtubule's plus end. The protein is Kinesin heavy chain (KLP1) of Gibberella moniliformis (Maize ear and stalk rot fungus).